Consider the following 339-residue polypeptide: Very-long-chain 3-oxoacyl-CoA reductase (339 aa).

The helical transmembrane segment at 21 to 41 threads the bilayer; that stretch reads WTTFLLALGSFNALRIIYQTL. Residues V67, N96, D121, N148, Y215, K219, V248, and S250 each contribute to the NADP(+) site. The active-site Proton acceptor is the Y215. K219 acts as the Lowers pKa of active site Tyr in catalysis.

This sequence belongs to the short-chain dehydrogenases/reductases (SDR) family.

It is found in the endoplasmic reticulum membrane. It catalyses the reaction a very-long-chain (3R)-3-hydroxyacyl-CoA + NADP(+) = a very-long-chain 3-oxoacyl-CoA + NADPH + H(+). Its pathway is lipid metabolism; fatty acid biosynthesis. Functionally, component of the microsomal membrane bound fatty acid elongation system, which produces the 26-carbon very long-chain fatty acids (VLCFA) from palmitate. Catalyzes the reduction of the 3-ketoacyl-CoA intermediate that is formed in each cycle of fatty acid elongation. VLCFAs serve as precursors for ceramide and sphingolipids. This chain is Very-long-chain 3-oxoacyl-CoA reductase, found in Coprinopsis cinerea (strain Okayama-7 / 130 / ATCC MYA-4618 / FGSC 9003) (Inky cap fungus).